The chain runs to 376 residues: Dihydroorotate dehydrogenase (quinone) (376 aa).

FMN contacts are provided by residues 74–78 (AGFDK) and Thr-98. Lys-78 lines the substrate pocket. Residue 123–127 (NRMGF) participates in substrate binding. FMN contacts are provided by Asn-155 and Asn-188. Residue Asn-188 participates in substrate binding. The Nucleophile role is filled by Ser-191. Asn-193 provides a ligand contact to substrate. The FMN site is built by Lys-226 and Thr-254. Residue 255–256 (NT) participates in substrate binding. FMN-binding positions include Gly-284, Gly-313, and 334-335 (YT).

Belongs to the dihydroorotate dehydrogenase family. Type 2 subfamily. In terms of assembly, monomer. Requires FMN as cofactor.

It localises to the cell membrane. It carries out the reaction (S)-dihydroorotate + a quinone = orotate + a quinol. It functions in the pathway pyrimidine metabolism; UMP biosynthesis via de novo pathway; orotate from (S)-dihydroorotate (quinone route): step 1/1. In terms of biological role, catalyzes the conversion of dihydroorotate to orotate with quinone as electron acceptor. The chain is Dihydroorotate dehydrogenase (quinone) from Nostoc punctiforme (strain ATCC 29133 / PCC 73102).